Consider the following 124-residue polypeptide: Chorion class high-cysteine HCA protein 12 (124 aa).

The signal sequence occupies residues 1-21; that stretch reads MFTFALLLLCVQGCLIQNVYG. The segment at 22–35 is left arm; the sequence is QCCGCGCGGGCGCG. Residues 36–83 form a central domain region; the sequence is CYGGEGDGNVNVCGELPVCGETLVCGRVPICGGVCFKGPACASGCVSI. A right arm (Gly- and Cys-rich tandem repeats) region spans residues 84–124; it reads CGRCCGCGCGGCGGCGCGCGGCGCGCGGCGGCGCGRRCCCC.

This sequence belongs to the chorion protein family.

In terms of biological role, this protein is one of many from the eggshell of the silk moth. The polypeptide is Chorion class high-cysteine HCA protein 12 (Bombyx mori (Silk moth)).